Reading from the N-terminus, the 387-residue chain is MLQRIYLDNNATTRIDPKVKEIMDPFLRDHYGNPSSLHQFGTETHPAIAEALDKLYKGINARDIDDVIITSCATESNNWVLKGVYFDECLKKGKNHIITTVAEHPAVRSTCNFLESLGVEVTYLPINEHGSITADQVKEAITEKTALVSVMWANNETGLIFPIEEIGAICKEKGVLFHTDAVQAIGKIPVDVLKANVDFLSFSAHKFHGPKGIGGLYIRSGVGLTPLFHGGEHMNGRRSGTLNVPYIVGMGEAMKLAVEHLDYEKEVVGKLRDKLEEALLKIPDVMVVGDRVHRVPNTTLISVRGIEGEAMLWDLNRSNIAASTGSACASEDLEANPVMVAIGASKELAHTAIRLSLSRFNTEAEIDKTIEVFSQAAVRLRNISSSY.

Pyridoxal 5'-phosphate-binding positions include Ala-73–Thr-74, Asn-155, Gln-183, and Ser-203–His-205. Lys-206 is subject to N6-(pyridoxal phosphate)lysine. Thr-241 serves as a coordination point for pyridoxal 5'-phosphate. Residue Cys-328 is the Cysteine persulfide intermediate of the active site. A [2Fe-2S] cluster-binding site is contributed by Cys-328.

Belongs to the class-V pyridoxal-phosphate-dependent aminotransferase family. NifS/IscS subfamily. In terms of assembly, homodimer. Forms a heterotetramer with IscU, interacts with other sulfur acceptors. The cofactor is pyridoxal 5'-phosphate.

It is found in the cytoplasm. The enzyme catalyses (sulfur carrier)-H + L-cysteine = (sulfur carrier)-SH + L-alanine. The protein operates within cofactor biosynthesis; iron-sulfur cluster biosynthesis. Functionally, master enzyme that delivers sulfur to a number of partners involved in Fe-S cluster assembly, tRNA modification or cofactor biosynthesis. Catalyzes the removal of elemental sulfur atoms from cysteine to produce alanine. Functions as a sulfur delivery protein for Fe-S cluster synthesis onto IscU, an Fe-S scaffold assembly protein, as well as other S acceptor proteins. This chain is Cysteine desulfurase IscS, found in Helicobacter pylori (strain J99 / ATCC 700824) (Campylobacter pylori J99).